The primary structure comprises 150 residues: Large ribosomal subunit protein uL15 (150 aa).

A compositionally biased stretch (polar residues) spans 1-15 (MNLSNLQPAEGSTHN). The segment at 1–53 (MNLSNLQPAEGSTHNQNKRVGRGEGSGKGGTAARGHKGAKSRSGYSKKIGFEG) is disordered. Over residues 23-32 (GEGSGKGGTA) the composition is skewed to gly residues.

It belongs to the universal ribosomal protein uL15 family. In terms of assembly, part of the 50S ribosomal subunit.

Binds to the 23S rRNA. The protein is Large ribosomal subunit protein uL15 of Flavobacterium johnsoniae (strain ATCC 17061 / DSM 2064 / JCM 8514 / BCRC 14874 / CCUG 350202 / NBRC 14942 / NCIMB 11054 / UW101) (Cytophaga johnsonae).